An 807-amino-acid chain; its full sequence is DNA gyrase subunit B (807 aa).

In terms of domain architecture, Toprim spans Ser429–Pro543. Positions 435, 508, and 510 each coordinate Mg(2+).

Belongs to the type II topoisomerase GyrB family. Heterotetramer, composed of two GyrA and two GyrB chains. In the heterotetramer, GyrA contains the active site tyrosine that forms a transient covalent intermediate with DNA, while GyrB binds cofactors and catalyzes ATP hydrolysis. It depends on Mg(2+) as a cofactor. The cofactor is Mn(2+). Ca(2+) is required as a cofactor.

The protein localises to the cytoplasm. It catalyses the reaction ATP-dependent breakage, passage and rejoining of double-stranded DNA.. A type II topoisomerase that negatively supercoils closed circular double-stranded (ds) DNA in an ATP-dependent manner to modulate DNA topology and maintain chromosomes in an underwound state. Negative supercoiling favors strand separation, and DNA replication, transcription, recombination and repair, all of which involve strand separation. Also able to catalyze the interconversion of other topological isomers of dsDNA rings, including catenanes and knotted rings. Type II topoisomerases break and join 2 DNA strands simultaneously in an ATP-dependent manner. The protein is DNA gyrase subunit B of Rickettsia conorii (strain ATCC VR-613 / Malish 7).